Consider the following 110-residue polypeptide: tRNA-binding protein YgjH (110 aa).

The region spanning 8 to 110 (DFARLEMRVG…RMMPAGVRVV (103 aa)) is the tRNA-binding domain.

Homodimer.

This chain is tRNA-binding protein YgjH (ygjH), found in Escherichia coli (strain K12).